A 615-amino-acid polypeptide reads, in one-letter code: Melanopsin-B (615 aa).

At 1 to 19 (MDMDRGFYRKVDVPDHAHY) the chain is on the extracellular side. The helical transmembrane segment at 20–40 (VIAFFVLIIGVVGVTGNALVM) threads the bilayer. At 41–56 (YAFLCNKKLRTPPNYF) the chain is on the cytoplasmic side. Residues 57–77 (IMNLAVSDFLMAITQSPIFFI) form a helical membrane-spanning segment. Over 78–93 (NSLFKEWIFGETGCRM) the chain is Extracellular. Cysteines 91 and 169 form a disulfide. The helical transmembrane segment at 94–114 (YAFCGALFGITSMINLLAISL) threads the bilayer. The Cytoplasmic portion of the chain corresponds to 115–136 (DRYIVITKPPQAIRWVSGRRTM). A helical membrane pass occupies residues 137 to 157 (VVILLVWLYSLAWSLAPLLGW). Residues 158 to 189 (SSYIPEGLMTSCTWDYVTSTPANKGYTLMLCC) lie on the Extracellular side of the membrane. The helical transmembrane segment at 190 to 210 (FVFFIPLGIISYCYLCMFLAI) threads the bilayer. At 211–244 (RSAGREIERLGTQVRKSTLMQQQTIKTEWKLTKV) the chain is on the cytoplasmic side. Residues 245-265 (AFVVIIVYVHSWSPYACVTLI) traverse the membrane as a helical segment. Over 266 to 279 (AWAGYGSHLSPYSK) the chain is Extracellular. A helical transmembrane segment spans residues 280–300 (AVPAVIAKASAIYNPFIYAII). An N6-(retinylidene)lysine modification is found at Lys-287. The Cytoplasmic portion of the chain corresponds to 301–615 (HSKYRDTLAE…RNLEESFMAL (315 aa)). 2 disordered regions span residues 390–420 (LGRS…TVAD) and 465–502 (NKHP…QNHP). Over residues 401–415 (AQQNRQTRSSDTLEQ) the composition is skewed to polar residues. Over residues 469–478 (NNNHKNHNNR) the composition is skewed to basic residues.

The protein belongs to the G-protein coupled receptor 1 family. Opsin subfamily. As to expression, expressed in the inner nuclear layer of the retina, possibly in amacrine and ganglion cells. Expressed in a subpopulation of neurons in the dorsal habenula.

The protein localises to the cell membrane. In terms of biological role, photoreceptor implicated in non-image-forming responses to light. In Gadus morhua (Atlantic cod), this protein is Melanopsin-B (opn4b).